A 609-amino-acid chain; its full sequence is Vanadium chloroperoxidase (609 aa).

Residues Lys353, Arg360, Ser402, Gly403, His404, Arg490, and His496 each coordinate vanadate. His404 functions as the Proton donor in the catalytic mechanism. The interval 569-609 (KPTPPEIQPMPQETPVQKPVGQQPVKGMWEEEQAPVVKEAP) is disordered.

It belongs to the vanadium-dependent haloperoxidase family. As to quaternary structure, homotetramer. It depends on vanadate as a cofactor. The N-terminus is blocked.

The protein resides in the secreted. It carries out the reaction RH + Cl(-) + H2O2 = RCl + 2 H2O.. In terms of biological role, catalyzes the oxidation of chloride in the presence of hydrogen peroxide to hypochlorous acid (ClOH), which in turn can react with a nucleophilic acceptor (RH), to form a chlorinated compound. The polypeptide is Vanadium chloroperoxidase (CPO) (Curvularia inaequalis (Helminthosporium inaequale)).